The primary structure comprises 252 residues: Orotidine 5'-phosphate decarboxylase (252 aa).

Substrate-binding positions include aspartate 26, lysine 48, 75-84 (DLKFHDIPNT), threonine 135, arginine 196, glutamine 205, glycine 225, and arginine 226. Lysine 77 serves as the catalytic Proton donor.

Belongs to the OMP decarboxylase family. Type 1 subfamily. In terms of assembly, homodimer.

The enzyme catalyses orotidine 5'-phosphate + H(+) = UMP + CO2. It functions in the pathway pyrimidine metabolism; UMP biosynthesis via de novo pathway; UMP from orotate: step 2/2. Catalyzes the decarboxylation of orotidine 5'-monophosphate (OMP) to uridine 5'-monophosphate (UMP). This Sodalis glossinidius (strain morsitans) protein is Orotidine 5'-phosphate decarboxylase.